The primary structure comprises 311 residues: Probable deoxyhypusine synthase (311 aa).

The Nucleophile role is filled by K284.

This sequence belongs to the deoxyhypusine synthase family. Requires NAD(+) as cofactor.

It carries out the reaction [eIF5A protein]-L-lysine + spermidine = [eIF5A protein]-deoxyhypusine + propane-1,3-diamine. It functions in the pathway protein modification; eIF5A hypusination. Catalyzes the NAD-dependent oxidative cleavage of spermidine and the subsequent transfer of the butylamine moiety of spermidine to the epsilon-amino group of a specific lysine residue of the eIF-5A precursor protein to form the intermediate deoxyhypusine residue. The protein is Probable deoxyhypusine synthase of Sulfolobus acidocaldarius (strain ATCC 33909 / DSM 639 / JCM 8929 / NBRC 15157 / NCIMB 11770).